Reading from the N-terminus, the 350-residue chain is Secreted effector protein PipB2 (350 aa).

4 Pentapeptide repeat domains span residues 162–201 (ANLT…NLSG), 202–241 (TSLG…SLLG), 247–286 (CNCS…IMEG), and 287–326 (AVLT…TLTD).

As to quaternary structure, interacts with the host kinesin light chain (KLC), a subunit of the kinesin-1 motor complex.

It localises to the secreted. The protein localises to the host membrane. In terms of biological role, effector proteins function to alter host cell physiology and promote bacterial survival in host tissues. Involved in the reorganization of late endosome/lysosome (LE/Lys) compartments in mammalian cells. Necessary and sufficient to link kinesin-1 onto the Salmonella-containing vacuole (SCV) membrane. Required for centrifugal extension of lysosomal glycoprotein-rich membrane tubules, known as Salmonella-induced filaments (Sifs), away from the SCV and toward the cell periphery. Required for virulence, but not for intracellular survival and replication in phagocytic cells. This Salmonella typhimurium (strain LT2 / SGSC1412 / ATCC 700720) protein is Secreted effector protein PipB2 (pipB2).